The sequence spans 264 residues: 3-methyl-2-oxobutanoate hydroxymethyltransferase (264 aa).

Mg(2+)-binding residues include Asp45 and Asp84. Residues 45 to 46 (DS), Asp84, and Lys112 contribute to the 3-methyl-2-oxobutanoate site. Glu114 is a Mg(2+) binding site. The active-site Proton acceptor is Glu181.

The protein belongs to the PanB family. In terms of assembly, homodecamer; pentamer of dimers. Mg(2+) serves as cofactor.

It is found in the cytoplasm. The catalysed reaction is 3-methyl-2-oxobutanoate + (6R)-5,10-methylene-5,6,7,8-tetrahydrofolate + H2O = 2-dehydropantoate + (6S)-5,6,7,8-tetrahydrofolate. The protein operates within cofactor biosynthesis; (R)-pantothenate biosynthesis; (R)-pantoate from 3-methyl-2-oxobutanoate: step 1/2. In terms of biological role, catalyzes the reversible reaction in which hydroxymethyl group from 5,10-methylenetetrahydrofolate is transferred onto alpha-ketoisovalerate to form ketopantoate. The protein is 3-methyl-2-oxobutanoate hydroxymethyltransferase of Alteromonas mediterranea (strain DSM 17117 / CIP 110805 / LMG 28347 / Deep ecotype).